The primary structure comprises 983 residues: Protein translocase subunit SecA (983 aa).

Residues Gln-83, 101-105 (GEGKT), and Asp-489 each bind ATP. The disordered stretch occupies residues 948 to 983 (ISSEEEDNNEKTNINNNEDLERTKGEAQQTAKNPNE). A compositionally biased stretch (polar residues) spans 973 to 983 (EAQQTAKNPNE).

It belongs to the SecA family. As to quaternary structure, monomer and homodimer. Part of the essential Sec protein translocation apparatus which comprises SecA, SecYEG and auxiliary proteins SecDF. Other proteins may also be involved.

It is found in the cell membrane. The protein localises to the cytoplasm. It carries out the reaction ATP + H2O + cellular proteinSide 1 = ADP + phosphate + cellular proteinSide 2.. Part of the Sec protein translocase complex. Interacts with the SecYEG preprotein conducting channel. Has a central role in coupling the hydrolysis of ATP to the transfer of proteins into and across the cell membrane, serving as an ATP-driven molecular motor driving the stepwise translocation of polypeptide chains across the membrane. This is Protein translocase subunit SecA from Mesomycoplasma hyopneumoniae (strain J / ATCC 25934 / NCTC 10110) (Mycoplasma hyopneumoniae).